Here is a 243-residue protein sequence, read N- to C-terminus: Carboxy-S-adenosyl-L-methionine synthase (243 aa).

Residues tyrosine 40, 65 to 67 (GCS), 90 to 91 (DN), 118 to 119 (DI), asparagine 133, and arginine 200 contribute to the S-adenosyl-L-methionine site.

It belongs to the class I-like SAM-binding methyltransferase superfamily. Cx-SAM synthase family. As to quaternary structure, homodimer.

It carries out the reaction prephenate + S-adenosyl-L-methionine = carboxy-S-adenosyl-L-methionine + 3-phenylpyruvate + H2O. In terms of biological role, catalyzes the conversion of S-adenosyl-L-methionine (SAM) to carboxy-S-adenosyl-L-methionine (Cx-SAM). This Shewanella sp. (strain W3-18-1) protein is Carboxy-S-adenosyl-L-methionine synthase.